Consider the following 253-residue polypeptide: Leucyl/phenylalanyl-tRNA--protein transferase (253 aa).

The protein belongs to the L/F-transferase family.

The protein localises to the cytoplasm. It catalyses the reaction N-terminal L-lysyl-[protein] + L-leucyl-tRNA(Leu) = N-terminal L-leucyl-L-lysyl-[protein] + tRNA(Leu) + H(+). The enzyme catalyses N-terminal L-arginyl-[protein] + L-leucyl-tRNA(Leu) = N-terminal L-leucyl-L-arginyl-[protein] + tRNA(Leu) + H(+). It carries out the reaction L-phenylalanyl-tRNA(Phe) + an N-terminal L-alpha-aminoacyl-[protein] = an N-terminal L-phenylalanyl-L-alpha-aminoacyl-[protein] + tRNA(Phe). Its function is as follows. Functions in the N-end rule pathway of protein degradation where it conjugates Leu, Phe and, less efficiently, Met from aminoacyl-tRNAs to the N-termini of proteins containing an N-terminal arginine or lysine. In Bordetella petrii (strain ATCC BAA-461 / DSM 12804 / CCUG 43448), this protein is Leucyl/phenylalanyl-tRNA--protein transferase.